Consider the following 143-residue polypeptide: Granulocyte-macrophage colony-stimulating factor (143 aa).

Positions 1–17 are cleaved as a signal peptide; sequence MWLQNLLLLGTVVCSFS. The O-linked (GalNAc...) threonine glycan is linked to T27. N-linked (GlcNAc...) asparagine glycosylation is found at N44 and N54. Cystine bridges form between C70–C112 and C104–C137.

It belongs to the GM-CSF family. In terms of assembly, monomer. The signaling GM-CSF receptor complex is a dodecamer of two head-to-head hexamers of two alpha, two beta, and two ligand subunits.

The protein localises to the secreted. Its function is as follows. Cytokine that stimulates the growth and differentiation of hematopoietic precursor cells from various lineages, including granulocytes, macrophages, eosinophils and erythrocytes. The chain is Granulocyte-macrophage colony-stimulating factor (CSF2) from Bos taurus (Bovine).